The primary structure comprises 223 residues: UPF0502 protein Sbal_1765 (223 aa).

This sequence belongs to the UPF0502 family.

The sequence is that of UPF0502 protein Sbal_1765 from Shewanella baltica (strain OS155 / ATCC BAA-1091).